The primary structure comprises 299 residues: Secreted LysM effector ldpB (299 aa).

Residues 1–19 form the signal peptide; it reads MGLTSILIAQVLFLGAANS. LysM domains follow at residues 46–91, 135–182, and 211–258; these read WVND…SYCV, AFYK…YVCI, and KYHK…YVCV. A glycan (N-linked (GlcNAc...) asparagine) is linked at asparagine 154. Positions 266–283 are enriched in low complexity; the sequence is ATATPQPTPQPQQSSSPD. Residues 266-288 form a disordered region; that stretch reads ATATPQPTPQPQQSSSPDQPMPQ.

Belongs to the secreted LysM effector family.

The protein resides in the secreted. The protein localises to the cell wall. It localises to the extracellular space. It is found in the extracellular matrix. In terms of biological role, cell wall chitin of A.fumigatus recruits lung eosinophils during infection and ldpB might have a role in sequestration of chitin and act as triggers of host immunity to dampen host defense. In Aspergillus fumigatus (strain ATCC MYA-4609 / CBS 101355 / FGSC A1100 / Af293) (Neosartorya fumigata), this protein is Secreted LysM effector ldpB.